A 314-amino-acid polypeptide reads, in one-letter code: MSTDEHLDPIPDSFILQPPVFHPVIPYGTTIFGGLYAGKMVTLQGVVPLHARRFQVDFQCGCCLHPQPDVAFRFSPRFYTVKPHVICNTHQGGLWQKEIRWPGVALQRGDSFLILFLFENEEVKVSVNGQHFLHYRYRLPLSRVDTLDISGDILVKAVGFLNINPFVEGSREYPVGYPFLLYSPRLEVPCSRALPRGLWPGQVIVVRGLVLKEPKDFTLSLKDGTTHVPVTLRASFTDRTLAWVSSWGRKKLISAPFLFHPQRFFEVLLLCQEGGLKLALNGQGLGATSLDQKALEQLRELRISGNVHLYCVHC.

Galectin domains lie at 27–161 and 190–314; these read YGTT…VGFL and CSRA…CVHC.

It localises to the nucleus. Functionally, binds lactose. May participate in the apoptosis of adipocytes. This is Galectin-12 (Lgals12) from Mus musculus (Mouse).